The primary structure comprises 116 residues: M-zodatoxin-Lt6a/b (116 aa).

Positions 1–22 (MKYFVVALTLAVAFVCIEECKT) are cleaved as a signal peptide. 2 propeptides span residues 23–44 (VEIG…EEAR) and 80–83 (EEAR). 2 consecutive short sequence motifs (processing quadruplet motif) follow at residues 41 to 44 (EEAR) and 80 to 83 (EEAR). Position 84 is a pyrrolidone carboxylic acid (glutamine 84).

This sequence belongs to the cationic peptide 03 (latarcin) family. 06 subfamily. In terms of processing, cleavage of the propeptide depends on the processing quadruplet motif (XXXR, with at least one of X being E). In terms of tissue distribution, expressed by the venom gland.

It localises to the secreted. Does not have antimicrobial activity against neither Gram-positive bacteria (A.globiformis VKM Ac-1112 (MIC&gt;70 uM), and B.subtilis VKM B-501 (MIC&gt;70 uM)), nor Gram-negative bacteria (E.coli DH5-alpha (MIC&gt;70 uM), E.coli MH1 (MIC&gt;70 uM), and P.aeruginosa PAO1 (MIC&gt;70 uM)), nor yeasts (P.pastoris GS115 (MIC&gt;70 uM), and S.cerevisiae Y190 (MIC&gt;70 uM)). Does not have hemolytic activity against rabbit erythrocytes. However, it causes some conductance changes in planar bilayer membranes, without membrane rupture, suggesting a cytolytic function on other biological targets. It causes paralysis, but is not lethal when injected into insect (M.domestica) larvae. The polypeptide is M-zodatoxin-Lt6a/b (Lachesana tarabaevi (Spider)).